Reading from the N-terminus, the 713-residue chain is Ribosomal RNA large subunit methyltransferase K/L (713 aa).

A THUMP domain is found at L43–L154.

Belongs to the methyltransferase superfamily. RlmKL family.

It is found in the cytoplasm. It carries out the reaction guanosine(2445) in 23S rRNA + S-adenosyl-L-methionine = N(2)-methylguanosine(2445) in 23S rRNA + S-adenosyl-L-homocysteine + H(+). It catalyses the reaction guanosine(2069) in 23S rRNA + S-adenosyl-L-methionine = N(2)-methylguanosine(2069) in 23S rRNA + S-adenosyl-L-homocysteine + H(+). Its function is as follows. Specifically methylates the guanine in position 2445 (m2G2445) and the guanine in position 2069 (m7G2069) of 23S rRNA. In Sodalis glossinidius (strain morsitans), this protein is Ribosomal RNA large subunit methyltransferase K/L.